The sequence spans 105 residues: Replication initiation control protein YabA (105 aa).

Zn(2+)-binding residues include His79, Cys81, Cys95, and Cys98.

This sequence belongs to the YabA family. Homotetramer. Interacts with both DnaA and DnaN, acting as a bridge between these two proteins. Requires Zn(2+) as cofactor.

The protein localises to the cytoplasm. It is found in the nucleoid. In terms of biological role, involved in control of chromosome replication initiation. Inhibits the cooperative binding of DnaA to the oriC region, thus negatively regulating initiation of chromosome replication. Inhibits the ability of DnaA-ATP to form a helix on DNA; does not disassemble preformed DnaA-DNA helices. Decreases the residence time of DnaA on the chromosome at its binding sites (oriC, replication forks and promoter-binding sites). Tethers DnaA to the replication machinery via the DNA polymerase beta sliding clamp subunit (dnaN). Associates with oriC and other DnaA targets on the chromosome in a DnaA-dependent manner. This Streptococcus suis (strain 98HAH33) protein is Replication initiation control protein YabA.